Here is a 374-residue protein sequence, read N- to C-terminus: Putative clathrin assembly protein At1g33340 (374 aa).

The ENTH domain maps to 30–163 (YNEKAFFDIE…GWIINQAGKL (134 aa)).

It is found in the membrane. Its subcellular location is the clathrin-coated pit. The protein localises to the golgi apparatus. It localises to the cytoplasmic vesicle. The protein resides in the clathrin-coated vesicle. The polypeptide is Putative clathrin assembly protein At1g33340 (Arabidopsis thaliana (Mouse-ear cress)).